Reading from the N-terminus, the 91-residue chain is Gem-associated protein 7 homolog (91 aa).

The Sm domain maps to 18–86 (LKFYQKMASA…VVGIEYNLVQ (69 aa)).

Belongs to the gemin-7 family. Part of the core SMN complex at least composed of smn1, yip11/gem2, gem6, gem7 and gem8. Interacts with gem6; the interaction is direct. Interacts with gem8; the interaction is direct.

In Schizosaccharomyces pombe (strain 972 / ATCC 24843) (Fission yeast), this protein is Gem-associated protein 7 homolog.